The chain runs to 53 residues: uncharacterized protein (53 aa).

This is an uncharacterized protein from Dictyostelium discoideum (Social amoeba).